The following is a 334-amino-acid chain: Protein-methionine-sulfoxide reductase catalytic subunit MsrP (334 aa).

The segment at residues 1-44 (MKKIRPLTEADVTAESAFFMQRRQVLKALGISAAALSLPSTAQA) is a signal peptide (tat-type signal). Residues N88, 91–92 (YE), C146, T181, N233, R238, and 249–251 (GIK) each bind Mo-molybdopterin.

This sequence belongs to the MsrP family. As to quaternary structure, heterodimer of a catalytic subunit (MsrP) and a heme-binding subunit (MsrQ). Mo-molybdopterin serves as cofactor. In terms of processing, predicted to be exported by the Tat system. The position of the signal peptide cleavage has not been experimentally proven.

It localises to the periplasm. It carries out the reaction L-methionyl-[protein] + a quinone + H2O = L-methionyl-(S)-S-oxide-[protein] + a quinol. It catalyses the reaction L-methionyl-[protein] + a quinone + H2O = L-methionyl-(R)-S-oxide-[protein] + a quinol. Functionally, part of the MsrPQ system that repairs oxidized periplasmic proteins containing methionine sulfoxide residues (Met-O), using respiratory chain electrons. Thus protects these proteins from oxidative-stress damage caused by reactive species of oxygen and chlorine generated by the host defense mechanisms. MsrPQ is essential for the maintenance of envelope integrity under bleach stress, rescuing a wide series of structurally unrelated periplasmic proteins from methionine oxidation, including the primary periplasmic chaperone SurA and the lipoprotein Pal. The catalytic subunit MsrP is non-stereospecific, being able to reduce both (R-) and (S-) diastereoisomers of methionine sulfoxide. The protein is Protein-methionine-sulfoxide reductase catalytic subunit MsrP of Salmonella arizonae (strain ATCC BAA-731 / CDC346-86 / RSK2980).